Consider the following 804-residue polypeptide: DNA mismatch repair protein MutS (804 aa).

614 to 621 (GPNMAGKS) is an ATP binding site.

It belongs to the DNA mismatch repair MutS family.

In terms of biological role, this protein is involved in the repair of mismatches in DNA. It is possible that it carries out the mismatch recognition step. This protein has a weak ATPase activity. The chain is DNA mismatch repair protein MutS from Ehrlichia ruminantium (strain Welgevonden).